Reading from the N-terminus, the 189-residue chain is Transcription factor FapR (189 aa).

Belongs to the FapR family.

Transcriptional factor involved in regulation of membrane lipid biosynthesis by repressing genes involved in fatty acid and phospholipid metabolism. The protein is Transcription factor FapR of Listeria monocytogenes serotype 4b (strain CLIP80459).